A 1004-amino-acid chain; its full sequence is Centriolar coiled-coil protein of 110 kDa (1004 aa).

Positions 1-221 (MEEYEEFCEK…SCLAEVTPDP (221 aa)) are CEP97 binding. Residues 51-90 (EKRKKIQEEKQKALDVQSRKQANRKKALLTRVQEILENVQ) adopt a coiled-coil conformation. Residues 64 to 82 (LDVQSRKQANRKKALLTRV) form a calmodulin-binding region. Positions 67-82 (QSRKQANRKKALLTRV) are required for interaction with CEP290. Disordered regions lie at residues 147 to 194 (PVNN…SSAS) and 239 to 279 (RELS…APPM). Residue Ser-170 is modified to Phosphoserine. Low complexity predominate over residues 243 to 252 (SRSLRNSLKR). Residues 253–276 (SVNETHSDRENDAAKASDCVKEKA) show a composition bias toward basic and acidic residues. Residues 349-564 (ENKVKSLKGP…QTQTSRQQMD (216 aa)) are interaction with CEP76. Ser-364, Ser-370, and Ser-398 each carry phosphoserine. Positions 401–433 (GKEEAVDRTAPAAAETTNESETVPKSPTDLTGV) are disordered. Residues 415-433 (ETTNESETVPKSPTDLTGV) show a composition bias toward polar residues. Ser-550 bears the Phosphoserine mark. Residues 641–699 (QELLKSKMLAFEEMRKRLEEQHAQQLSLLIAEQEREQEQLQKEIEEQEKMLKEKAVTTD) adopt a coiled-coil conformation. Calmodulin-binding stretches follow at residues 773-813 (GRAQ…DKLK) and 901-916 (VALS…RKKF). The tract at residues 955 to 1004 (LSRQGTPKTSVKGVVQNRQKPSQSRVPNRAPVSGAYAGKTQRKRPNVATI) is disordered. The span at 970–980 (QNRQKPSQSRV) shows a compositional bias: polar residues. Residues 994-1004 (TQRKRPNVATI) show a composition bias toward basic residues.

As to quaternary structure, interacts with CALM1, CETN2, CEP76, CEP104, CEP290 and TALPID3. Interacts with CEP97. Seems to associate with discrete CETN2, CEP97 and CEP290-containing complexes. Interacts with NEURL4 and CCNF; these interactions are not mutually exclusive and both lead to CCP110 ubiquitination and proteasome-dependent degradation. Via its interaction with NEURL4, may indirectly interact with HERC2. Interacts with KIF24, leading to its recruitment to centrioles. Interacts with USP20 and USP33. Interacts with MPHOSPH9. Interacts (via N-terminal region) with ENKD1 (via central region); ENKD1 competes with CEP97 for binding to CCP110, destabilizing the interaction between CP110 and CEP97 which promotes the removal of CCP110 and CEP97 from the mother centriole and allows the initiation of ciliogenesis. Phosphorylated by CDKs. In terms of processing, ubiquitinated by the SCF(CCNF) during G2 phase, leading to its degradation by the proteasome and preventing centrosome reduplication. Deubiquitinated by USP33 in S and G2/M phase, leading to stabilize CCP110 during the period which centrioles duplicate and elongate. Ubiquitinated by the EDVP complex, leading to its degradation.

It localises to the cytoplasm. Its subcellular location is the cytoskeleton. It is found in the microtubule organizing center. The protein localises to the centrosome. The protein resides in the centriole. It localises to the cilium basal body. Functionally, necessary for centrosome duplication at different stages of procentriole formation. Acts as a key negative regulator of ciliogenesis in collaboration with CEP97 by capping the mother centriole thereby preventing cilia formation. Also involved in promoting ciliogenesis. May play a role in the assembly of the mother centriole subdistal appendages (SDA) thereby effecting the fusion of recycling endosomes to basal bodies during cilia formation. Required for correct spindle formation and has a role in regulating cytokinesis and genome stability via cooperation with CALM1 and CETN2. The chain is Centriolar coiled-coil protein of 110 kDa (Ccp110) from Mus musculus (Mouse).